A 509-amino-acid chain; its full sequence is Maturase K (509 aa).

It belongs to the intron maturase 2 family. MatK subfamily.

It is found in the plastid. The protein resides in the chloroplast. Functionally, usually encoded in the trnK tRNA gene intron. Probably assists in splicing its own and other chloroplast group II introns. The sequence is that of Maturase K from Jacaranda mimosifolia (Jacaranda).